Reading from the N-terminus, the 318-residue chain is Thymidylate synthase (318 aa).

DUMP is bound by residues Arg25 and Arg180–Arg181. Residue Cys200 is the Nucleophile of the active site. Residues Arg220–Asp223, Asn231, and His261–Tyr263 contribute to the dUMP site. Asp223 is a binding site for (6R)-5,10-methylene-5,6,7,8-tetrahydrofolate. Ala317 provides a ligand contact to (6R)-5,10-methylene-5,6,7,8-tetrahydrofolate.

The protein belongs to the thymidylate synthase family. Bacterial-type ThyA subfamily. Homodimer.

It is found in the cytoplasm. The catalysed reaction is dUMP + (6R)-5,10-methylene-5,6,7,8-tetrahydrofolate = 7,8-dihydrofolate + dTMP. It functions in the pathway pyrimidine metabolism; dTTP biosynthesis. Catalyzes the reductive methylation of 2'-deoxyuridine-5'-monophosphate (dUMP) to 2'-deoxythymidine-5'-monophosphate (dTMP) while utilizing 5,10-methylenetetrahydrofolate (mTHF) as the methyl donor and reductant in the reaction, yielding dihydrofolate (DHF) as a by-product. This enzymatic reaction provides an intracellular de novo source of dTMP, an essential precursor for DNA biosynthesis. In Lactobacillus gasseri (strain ATCC 33323 / DSM 20243 / BCRC 14619 / CIP 102991 / JCM 1131 / KCTC 3163 / NCIMB 11718 / NCTC 13722 / AM63), this protein is Thymidylate synthase.